A 289-amino-acid chain; its full sequence is YLVSPAAYAALGAYMFLLILIGFPVNFLTLYVTLEHKKLRTPLNYILLNLAVADLFMVLGGFTTTMYTSMHGYFVLGRLGCNLEGFFATLGGEIALWSLVVLAIERWIVVCKPISKFRFTEDNAIMGLAFSWVMALACAVPPLVGWLRYIPEGMQCTCGVDYYTRAEGFDNESFVIYMFIVHFLIPLSVIFFCYGRLLCAVKEAAAAQQESETTQRAEKEVSRMVVIMVIGFLVCWLPYASVAWWIFCNQGSDFGPIFMTLPSFFAKRPAIYNPMIYICMNKQFRHCMI.

Residues 1–7 lie on the Extracellular side of the membrane; it reads YLVSPAA. The chain crosses the membrane as a helical span at residues 8 to 32; the sequence is YAALGAYMFLLILIGFPVNFLTLYV. Topologically, residues 33 to 44 are cytoplasmic; the sequence is TLEHKKLRTPLN. The helical transmembrane segment at 45–67 threads the bilayer; it reads YILLNLAVADLFMVLGGFTTTMY. The Extracellular portion of the chain corresponds to 68-81; that stretch reads TSMHGYFVLGRLGC. Cysteines 81 and 158 form a disulfide. A helical membrane pass occupies residues 82–104; the sequence is NLEGFFATLGGEIALWSLVVLAI. Residues 105–107 carry the 'Ionic lock' involved in activated form stabilization motif; it reads ERW. The Cytoplasmic segment spans residues 105–123; sequence ERWIVVCKPISKFRFTEDN. A helical transmembrane segment spans residues 124 to 144; it reads AIMGLAFSWVMALACAVPPLV. Residues 145-173 are Extracellular-facing; the sequence is GWLRYIPEGMQCTCGVDYYTRAEGFDNES. A glycan (N-linked (GlcNAc...) asparagine) is linked at Asn-171. A helical transmembrane segment spans residues 174-195; the sequence is FVIYMFIVHFLIPLSVIFFCYG. Over 196-223 the chain is Cytoplasmic; that stretch reads RLLCAVKEAAAAQQESETTQRAEKEVSR. The helical transmembrane segment at 224–245 threads the bilayer; the sequence is MVVIMVIGFLVCWLPYASVAWW. Over 246–257 the chain is Extracellular; that stretch reads IFCNQGSDFGPI. Residues 258–279 form a helical membrane-spanning segment; sequence FMTLPSFFAKRPAIYNPMIYIC. At Lys-267 the chain carries N6-(retinylidene)lysine. The Cytoplasmic segment spans residues 280–289; the sequence is MNKQFRHCMI.

The protein belongs to the G-protein coupled receptor 1 family. Opsin subfamily. Post-translationally, phosphorylated on some or all of the serine and threonine residues present in the C-terminal region. In terms of processing, contains one covalently linked retinal chromophore.

The protein localises to the membrane. It localises to the cell projection. Its subcellular location is the cilium. It is found in the photoreceptor outer segment. In terms of biological role, photoreceptor required for image-forming vision at low light intensity. While most salt water fish species use retinal as chromophore, most freshwater fish use 3-dehydroretinal, or a mixture of retinal and 3-dehydroretinal. Light-induced isomerization of 11-cis to all-trans retinal triggers a conformational change that activates signaling via G-proteins. Subsequent receptor phosphorylation mediates displacement of the bound G-protein alpha subunit by arrestin and terminates signaling. The protein is Rhodopsin (rho) of Batrachocottus nikolskii (Fat sculpin).